The following is a 183-amino-acid chain: Capsid protein (183 aa).

The interval 136–183 (NAPILSTLPETTVVRRRGRSPRRRTPSPRRRRSQSPRRRRSQSRESQC) is disordered. Positions 149-176 (VRRRGRSPRRRTPSPRRRRSQSPRRRRS) are enriched in basic residues. Residues Ser-155, Ser-162, and Ser-170 each carry the phosphoserine; by host modification. One copy of the 1; half-length repeat lies at 155-161 (SPRRRTP). The segment at 155 to 177 (SPRRRTPSPRRRRSQSPRRRRSQ) is 3 X 8 AA repeats of S-P-R-R-R-[PR]-S-Q. A Bipartite nuclear localization signal motif is present at residues 158–175 (RRTPSPRRRRSQSPRRRR). 2 tandem repeats follow at residues 162 to 169 (SPRRRRSQ) and 170 to 177 (SPRRRRSQ). Residues 177 to 183 (QSRESQC) form an RNA binding region.

It belongs to the orthohepadnavirus core antigen family. Homodimerizes, then multimerizes. Interacts with cytosol exposed regions of viral L glycoprotein present in the reticulum-to-Golgi compartment. Interacts with human FLNB. Phosphorylated form interacts with host importin alpha; this interaction depends on the exposure of the NLS, which itself depends upon genome maturation and/or phosphorylation of the capsid protein. Interacts with host NUP153. Phosphorylated by host SRPK1, SRPK2, and maybe protein kinase C or GAPDH. Phosphorylation is critical for pregenomic RNA packaging. Protein kinase C phosphorylation is stimulated by HBx protein and may play a role in transport of the viral genome to the nucleus at the late step during the viral replication cycle.

The protein resides in the virion. It localises to the host cytoplasm. Functionally, self assembles to form an icosahedral capsid. Most capsids appear to be large particles with an icosahedral symmetry of T=4 and consist of 240 copies of capsid protein, though a fraction forms smaller T=3 particles consisting of 180 capsid proteins. Entering capsids are transported along microtubules to the nucleus. Phosphorylation of the capsid is thought to induce exposure of nuclear localization signal in the C-terminal portion of the capsid protein that allows binding to the nuclear pore complex via the importin (karyopherin-) alpha and beta. Capsids are imported in intact form through the nuclear pore into the nuclear basket, where it probably binds NUP153. Only capsids that contain the mature viral genome can release the viral DNA and capsid protein into the nucleoplasm. Immature capsids get stuck in the basket. Capsids encapsulate the pre-genomic RNA and the P protein. Pre-genomic RNA is reverse-transcribed into DNA while the capsid is still in the cytoplasm. The capsid can then either be directed to the nucleus, providing more genomes for transcription, or bud through the endoplasmic reticulum to provide new virions. The protein is Capsid protein of Homo sapiens (Human).